The sequence spans 396 residues: Acetate kinase (396 aa).

Asn-8 serves as a coordination point for Mg(2+). Residue Lys-15 participates in ATP binding. Residue Arg-89 participates in substrate binding. Asp-146 serves as the catalytic Proton donor/acceptor. ATP is bound by residues His-206 to Gly-210, Asp-283 to Arg-285, and Gly-331 to Asn-335. Position 383 (Glu-383) interacts with Mg(2+).

The protein belongs to the acetokinase family. As to quaternary structure, homodimer. Requires Mg(2+) as cofactor. The cofactor is Mn(2+).

It localises to the cytoplasm. The enzyme catalyses acetate + ATP = acetyl phosphate + ADP. The protein operates within metabolic intermediate biosynthesis; acetyl-CoA biosynthesis; acetyl-CoA from acetate: step 1/2. Catalyzes the formation of acetyl phosphate from acetate and ATP. Can also catalyze the reverse reaction. This Streptococcus pneumoniae (strain JJA) protein is Acetate kinase.